We begin with the raw amino-acid sequence, 87 residues long: Small archaeal modifier protein 1 (87 aa).

Gly87 is subject to 1-thioglycine; alternate. Gly87 bears the Glycyl adenylate; alternate mark. Gly87 participates in a covalent cross-link: Glycyl lysine isopeptide (Gly-Lys) (interchain with K-? in acceptor proteins); alternate.

In terms of processing, the C-terminal glycine is likely acyl-adenylated (-COAMP) by UbaA, and also probably thiocarboxylated (-COSH) to function in sulfur transfer.

Its function is as follows. Functions as a protein modifier covalently attached to lysine residues of substrate proteins, as well as a sulfur carrier in molybdenum cofactor (MoCo) biosynthesis. The protein modification process is termed sampylation and involves the formation of an isopeptide bond between the SAMP1 C-terminal glycine carboxylate and the epsilon-amino group of lysine residues on target proteins. May serve as a proteolytic signal in the cell to target proteins for degradation by proteasomes. This Haloferax volcanii (strain ATCC 29605 / DSM 3757 / JCM 8879 / NBRC 14742 / NCIMB 2012 / VKM B-1768 / DS2) (Halobacterium volcanii) protein is Small archaeal modifier protein 1 (samp1).